The primary structure comprises 758 residues: Transcription activator MSS11 (758 aa).

The tract at residues 1–23 (MDNTTNINTNERSSNTDFSSAPN) is disordered. Positions 51–83 (SKQLLYAHIYNYLIKNNYWNSAAKFLSEADLPL) constitute a LisH domain. Disordered regions lie at residues 191–220 (TQNSFPVSEESFRPNGDGSNFNLNDPTNRN), 268–299 (LQSPAQPQQSSQQQIQQPQHQPQHQPQQQQQQ), 322–355 (QQHQQQQQTPYPIVNPQMVPHIPSENSHSTGLMP), 428–454 (GNQNYQSNTRNNTAEETTPTNDNNANG), and 587–681 (KTNT…TKES). The span at 207–220 (DGSNFNLNDPTNRN) shows a compositional bias: polar residues. Residues 269–299 (QSPAQPQQSSQQQIQQPQHQPQHQPQQQQQQ) are compositionally biased toward low complexity. Composition is skewed to polar residues over residues 345–355 (SENSHSTGLMP), 436–454 (TRNNTAEETTPTNDNNANG), and 587–600 (KTNTSVPQNDSTSV). The segment covering 605-664 (NNNNNNNNNNNNNNNNNSNNSNNNNNNNNNNNNSNNTPTVSQPSSKCTSSSSTTPNITTT) has biased composition (low complexity). The segment covering 667–676 (PKRKQRVGKT) has biased composition (basic residues).

It belongs to the MSS11 family. Interacts with FLO8, STE12 and TEC1.

Its subcellular location is the cytoplasm. The protein localises to the nucleus. Its function is as follows. Transcription factor that regulates pseudohyphal differentiation, invasive growth, floculation, adhesion and starch metabolism in response to nutrient availability. This chain is Transcription activator MSS11 (MSS11), found in Saccharomyces cerevisiae (strain ATCC 204508 / S288c) (Baker's yeast).